The following is a 115-amino-acid chain: Thiosulfate:glutathione sulfurtransferase (115 aa).

A Rhodanese domain is found at 17–115 (ASGRARLFDV…AYREWLEKES (99 aa)). The active-site Cysteine persulfide intermediate is cysteine 79.

Highly expressed in kidney, liver and skeletal muscle. Lower levels of expression in heart, colon, thymus, spleen, placenta and lung. Weakly expressed in brain, small intestine and peripheral blood leukocytes. Expressed at high levels in the breast carcinoma cell lines MCF-7 and MDA-MB-468 and at a lower level in the breast carcinoma cell line MDA-MB-231, the colon carcinoma call line LoVo and the lung carcinoma cell line A-549. No expression in the cell lines EFO-27 and HeLa, or the normal breast tissue cell lines MCF-10A and H184A1. Detected in invasive ductal carcinoma, but not in the adjacent tissues.

Its subcellular location is the cytoplasm. The protein localises to the perinuclear region. The catalysed reaction is thiosulfate + glutathione = S-sulfanylglutathione + sulfite + H(+). It catalyses the reaction thiosulfate + 2 glutathione = glutathione disulfide + hydrogen sulfide + sulfite + 2 H(+). Its activity is regulated as follows. GSS(-) is a potent inhibitor of TSTD1, since the presence of the sulfur dioxygenase (SDO) strongly increases the TSTD1 catalytic activity. Thiosulfate:glutathione sulfurtransferase (TST) required to produce S-sulfanylglutathione (GSS(-)), a central intermediate in hydrogen sulfide metabolism. Provides the link between the first step in mammalian H(2)S metabolism performed by the sulfide:quinone oxidoreductase (SQOR) which catalyzes the conversion of H(2)S to thiosulfate, and the sulfur dioxygenase (SDO) which uses GSS(-) as substrate. The thermodynamic coupling of the irreversible SDO and reversible TST reactions provides a model for the physiologically relevant reaction with thiosulfate as the sulfane donor. GSS(-) spontaneously reacts with glutathione to form glutathione disulfide. This Homo sapiens (Human) protein is Thiosulfate:glutathione sulfurtransferase (TSTD1).